The chain runs to 494 residues: uncharacterized protein (494 aa).

This is an uncharacterized protein from Magallana gigas (Pacific oyster).